We begin with the raw amino-acid sequence, 122 residues long: Large ribosomal subunit protein uL18 (122 aa).

Basic and acidic residues predominate over residues 1-11; the sequence is MLKKPDRNALR. A disordered region spans residues 1 to 22; that stretch reads MLKKPDRNALRDKRRRRVRKKI. A compositionally biased stretch (basic residues) spans 12-22; that stretch reads DKRRRRVRKKI.

Belongs to the universal ribosomal protein uL18 family. Part of the 50S ribosomal subunit; part of the 5S rRNA/L5/L18/L25 subcomplex. Contacts the 5S and 23S rRNAs.

Its function is as follows. This is one of the proteins that bind and probably mediate the attachment of the 5S RNA into the large ribosomal subunit, where it forms part of the central protuberance. This is Large ribosomal subunit protein uL18 from Pelotomaculum thermopropionicum (strain DSM 13744 / JCM 10971 / SI).